The sequence spans 300 residues: Epimerase family protein MW0731 (300 aa).

The protein belongs to the NAD(P)-dependent epimerase/dehydratase family. SDR39U1 subfamily.

This chain is Epimerase family protein MW0731, found in Staphylococcus aureus (strain MW2).